The sequence spans 325 residues: MTENFWRELPRPFFVLAPMEDVTDVVFRHVVSEAGRPDVFFTEFTNSESYCHPDGKDSVRGRLTFTEDEQPIVAHIWGDKPENFRKMSIGMAELGFKGLDINMGCPVPNVAGNGKGSGLICRPAVAAELIQAAKAGGLPVSVKTRLGYTDVDEWREWLTHILKQDIANLSIHLRTRAEMSKVDAHWELIPEIKKLRDEVAPDTLLTINGDIPDRQTGLKLAEQYGVDGIMIGRGIFTNPFAFEKEPKEHSSKELLDLLRLHLDLHDEYSKEEARPYKPLPRFFKIYLRGFRGASELRNQCMNTKSTDEVRALLDDFERKYLDGIE.

18-20 (PME) contacts FMN. The active-site Proton donor is the C105. Residues K143, 208-210 (NGD), and 232-233 (GR) each bind FMN.

Belongs to the Dus family. Requires FMN as cofactor.

The enzyme catalyses a 5,6-dihydrouridine in tRNA + NAD(+) = a uridine in tRNA + NADH + H(+). The catalysed reaction is a 5,6-dihydrouridine in tRNA + NADP(+) = a uridine in tRNA + NADPH + H(+). Catalyzes the synthesis of 5,6-dihydrouridine (D), a modified base found in the D-loop of most tRNAs, via the reduction of the C5-C6 double bond in target uridines. This is Probable tRNA-dihydrouridine synthase 2 (dus2) from Bacillus subtilis (strain 168).